We begin with the raw amino-acid sequence, 148 residues long: Large ribosomal subunit protein uL11 (148 aa).

The disordered stretch occupies residues 89–108 (EKKKGSGAHKPGKEKVGQVT).

This sequence belongs to the universal ribosomal protein uL11 family. In terms of assembly, part of the ribosomal stalk of the 50S ribosomal subunit. Interacts with L10 and the large rRNA to form the base of the stalk. L10 forms an elongated spine to which L12 dimers bind in a sequential fashion forming a multimeric L10(L12)X complex. One or more lysine residues are methylated.

Its function is as follows. Forms part of the ribosomal stalk which helps the ribosome interact with GTP-bound translation factors. The polypeptide is Large ribosomal subunit protein uL11 (Anaeromyxobacter dehalogenans (strain 2CP-1 / ATCC BAA-258)).